Reading from the N-terminus, the 501-residue chain is Lycopene beta cyclase, chloroplastic (501 aa).

A chloroplast-targeting transit peptide spans 1-48 (MDTLLKTPNKLDFFIPQFHGFERLCSNNPYHSRVRLGVKKRAIKIVSS). At valine 49 the chain carries N-acetylvaline. An NAD(+)-binding site is contributed by 85–113 (LAIVGGGPAGLAVAQQVSEAGLSVCSIDP).

It belongs to the lycopene cyclase family.

Its subcellular location is the plastid. The protein resides in the chloroplast. The catalysed reaction is a carotenoid psi-end group = a carotenoid beta-end derivative. The protein operates within carotenoid biosynthesis; beta-carotene biosynthesis. Its pathway is carotenoid biosynthesis; beta-zeacarotene biosynthesis. Its function is as follows. Involved in carotenoid biosynthesis. Catalyzes the double cyclization reaction which converts lycopene to beta-carotene and neurosporene to beta-zeacarotene. Major lycopene beta-cyclase that does not seem to be involved in neoxanthin synthesis. Involved in salt tolerance improvement by increasing synthesis of carotenoids, which impairs reactive oxygen species (ROS) and protects the photosynthetic system under salt stress. This Arabidopsis thaliana (Mouse-ear cress) protein is Lycopene beta cyclase, chloroplastic.